The primary structure comprises 232 residues: MKIGIIGAMEEEVTLLRDKIDNRQTITLGGCEIYTGQLNGTEVALLKSGIGKVAAALGATLLLEHSKPDVIINTGSAGGLASTLKVGDIVVSDEARYHDADVTAFGYEYGQLPGCPAGFKADDKLIAAAESCIRELNLNAVRGLIVSGDAFINGSVGLAKIRHNFPDAVAVEMEATAIAHVCYNFNVPFVVVRAISDVADQQSHLSFDEFLAVAAKQSTLMVETLVQKLAHG.

Residue E12 is the Proton acceptor of the active site. Substrate is bound by residues G78, I152, and 173–174 (ME). D197 (proton donor) is an active-site residue.

The protein belongs to the PNP/UDP phosphorylase family. MtnN subfamily. As to quaternary structure, homodimer.

It catalyses the reaction S-adenosyl-L-homocysteine + H2O = S-(5-deoxy-D-ribos-5-yl)-L-homocysteine + adenine. It carries out the reaction S-methyl-5'-thioadenosine + H2O = 5-(methylsulfanyl)-D-ribose + adenine. The catalysed reaction is 5'-deoxyadenosine + H2O = 5-deoxy-D-ribose + adenine. The protein operates within amino-acid biosynthesis; L-methionine biosynthesis via salvage pathway; S-methyl-5-thio-alpha-D-ribose 1-phosphate from S-methyl-5'-thioadenosine (hydrolase route): step 1/2. Functionally, catalyzes the irreversible cleavage of the glycosidic bond in both 5'-methylthioadenosine (MTA) and S-adenosylhomocysteine (SAH/AdoHcy) to adenine and the corresponding thioribose, 5'-methylthioribose and S-ribosylhomocysteine, respectively. Also cleaves 5'-deoxyadenosine, a toxic by-product of radical S-adenosylmethionine (SAM) enzymes, into 5-deoxyribose and adenine. Thus, is required for in vivo function of the radical SAM enzymes biotin synthase and lipoic acid synthase, that are inhibited by 5'-deoxyadenosine accumulation. The polypeptide is 5'-methylthioadenosine/S-adenosylhomocysteine nucleosidase (Salmonella dublin (strain CT_02021853)).